The sequence spans 1044 residues: Phosphatidylinositol 4,5-bisphosphate 3-kinase catalytic subunit delta isoform (1044 aa).

The region spanning 16–105 (ENQSVVVDFL…LPVLRLVARE (90 aa)) is the PI3K-ABD domain. Positions 187–278 (NRALLVNVKF…GLTPHLTMVH (92 aa)) constitute a PI3K-RBD domain. Residues 287 to 312 (DEQSNPAPQVQKPRAKPPPIPAKKPS) are disordered. The region spanning 319–476 (LEQPFRIELI…SAAALLICLP (158 aa)) is the C2 PI3K-type domain. In terms of domain architecture, PIK helical spans 497-674 (HSECVHVTEE…GLILEAYCRG (178 aa)). Position 524 is a phosphotyrosine (tyrosine 524). The 283-residue stretch at 745 to 1027 (CVEQCTFMDS…KFNEALRESW (283 aa)) folds into the PI3K/PI4K catalytic domain. A G-loop region spans residues 751-757 (FMDSKMK). Positions 890 to 898 (GIGDRHSDN) are catalytic loop. The segment at 909–935 (HIDFGHFLGNFKTKFGINRERVPFILT) is activation loop. Serine 1039 carries the post-translational modification Phosphoserine; by autocatalysis.

The protein belongs to the PI3/PI4-kinase family. In terms of assembly, heterodimer of a catalytic subunit PIK3CD and a p85 regulatory subunit (PIK3R1, PIK3R2 or PIK3R3). Interacts with ERAS. Interacts with HRAS. In terms of processing, autophosphorylation on Ser-1039 results in the almost complete inactivation of the lipid kinase activity. In terms of tissue distribution, in humans, the highest levels of expression are seen in peripheral blood mononuclear cells, spleen, and thymus, and low levels of expression in testes, uterus, colon, and small intestine but not in other tissues examined including prostate, heart, brain, and liver. Isoform 2 is expressed in normal thymus, lung and spleen tissues, and is detected at low levels in normal lysates from colon and ovarian biopsies, at elevated levels in lysates from colorectal tumors and is abundantly expressed in some ovarian tumors (at protein level). Both isoform 1 and isoform 2 are widely expressed. Isoform 1 is expressed predominantly in leukocytes.

The protein resides in the cytoplasm. The catalysed reaction is a 1,2-diacyl-sn-glycero-3-phospho-(1D-myo-inositol-4,5-bisphosphate) + ATP = a 1,2-diacyl-sn-glycero-3-phospho-(1D-myo-inositol-3,4,5-trisphosphate) + ADP + H(+). It catalyses the reaction a 1,2-diacyl-sn-glycero-3-phospho-(1D-myo-inositol) + ATP = a 1,2-diacyl-sn-glycero-3-phospho-(1D-myo-inositol-3-phosphate) + ADP + H(+). The enzyme catalyses 1-octadecanoyl-2-(5Z,8Z,11Z,14Z)-eicosatetraenoyl-sn-glycero-3-phospho-1D-myo-inositol 4,5-bisphosphate + ATP = 1-octadecanoyl-2-(5Z,8Z,11Z,14Z-eicosatetraenoyl)-sn-glycero-3-phospho-(1D-myo-inositol 3,4,5-triphosphate) + ADP + H(+). It participates in phospholipid metabolism; phosphatidylinositol phosphate biosynthesis. With respect to regulation, activated by growth factors and cytokine receptors through a tyrosine-kinase-dependent mechanism. Activated by RAS. IC87114 inhibits lipid kinase activity and is selective in cells at doses up to 5-10 uM. IC87114 blocks T-cell receptor signaling in naive and memory T-cells and reduces cytokine production by memory T-cells. Its function is as follows. Phosphoinositide-3-kinase (PI3K) phosphorylates phosphatidylinositol (PI) and its phosphorylated derivatives at position 3 of the inositol ring to produce 3-phosphoinositides. Uses ATP and PtdIns(4,5)P2 (phosphatidylinositol 4,5-bisphosphate) to generate phosphatidylinositol 3,4,5-trisphosphate (PIP3). PIP3 plays a key role by recruiting PH domain-containing proteins to the membrane, including AKT1 and PDPK1, activating signaling cascades involved in cell growth, survival, proliferation, motility and morphology. Mediates immune responses. Plays a role in B-cell development, proliferation, migration, and function. Required for B-cell receptor (BCR) signaling. Mediates B-cell proliferation response to anti-IgM, anti-CD40 and IL4 stimulation. Promotes cytokine production in response to TLR4 and TLR9. Required for antibody class switch mediated by TLR9. Involved in the antigen presentation function of B-cells. Involved in B-cell chemotaxis in response to CXCL13 and sphingosine 1-phosphate (S1P). Required for proliferation, signaling and cytokine production of naive, effector and memory T-cells. Required for T-cell receptor (TCR) signaling. Mediates TCR signaling events at the immune synapse. Activation by TCR leads to antigen-dependent memory T-cell migration and retention to antigenic tissues. Together with PIK3CG participates in T-cell development. Contributes to T-helper cell expansion and differentiation. Required for T-cell migration mediated by homing receptors SELL/CD62L, CCR7 and S1PR1 and antigen dependent recruitment of T-cells. Together with PIK3CG is involved in natural killer (NK) cell development and migration towards the sites of inflammation. Participates in NK cell receptor activation. Plays a role in NK cell maturation and cytokine production. Together with PIK3CG is involved in neutrophil chemotaxis and extravasation. Together with PIK3CG participates in neutrophil respiratory burst. Plays important roles in mast-cell development and mast cell mediated allergic response. Involved in stem cell factor (SCF)-mediated proliferation, adhesion and migration. Required for allergen-IgE-induced degranulation and cytokine release. The lipid kinase activity is required for its biological function. Isoform 2 may be involved in stabilizing total RAS levels, resulting in increased ERK phosphorylation and increased PI3K activity. The protein is Phosphatidylinositol 4,5-bisphosphate 3-kinase catalytic subunit delta isoform (PIK3CD) of Homo sapiens (Human).